Consider the following 91-residue polypeptide: Small ribosomal subunit protein bS18 (91 aa).

This sequence belongs to the bacterial ribosomal protein bS18 family. In terms of assembly, part of the 30S ribosomal subunit. Forms a tight heterodimer with protein bS6.

Binds as a heterodimer with protein bS6 to the central domain of the 16S rRNA, where it helps stabilize the platform of the 30S subunit. In Burkholderia lata (strain ATCC 17760 / DSM 23089 / LMG 22485 / NCIMB 9086 / R18194 / 383), this protein is Small ribosomal subunit protein bS18.